The chain runs to 689 residues: Elongation factor G (689 aa).

One can recognise a tr-type G domain in the interval 8–282; that stretch reads ERTRNIGIMA…AVVDYLPAPT (275 aa). GTP is bound by residues 17–24, 81–85, and 135–138; these read AHIDAGKT, DTPGH, and NKMD.

It belongs to the TRAFAC class translation factor GTPase superfamily. Classic translation factor GTPase family. EF-G/EF-2 subfamily.

Its subcellular location is the cytoplasm. Functionally, catalyzes the GTP-dependent ribosomal translocation step during translation elongation. During this step, the ribosome changes from the pre-translocational (PRE) to the post-translocational (POST) state as the newly formed A-site-bound peptidyl-tRNA and P-site-bound deacylated tRNA move to the P and E sites, respectively. Catalyzes the coordinated movement of the two tRNA molecules, the mRNA and conformational changes in the ribosome. This Desulforudis audaxviator (strain MP104C) protein is Elongation factor G.